The primary structure comprises 352 residues: Photosystem II D2 protein (352 aa).

Thr2 carries the post-translational modification N-acetylthreonine. Position 2 is a phosphothreonine (Thr2). Residues Cys40–Thr60 form a helical membrane-spanning segment. Residue His117 participates in chlorophyll a binding. A helical transmembrane segment spans residues Gly124–Pro140. Gln129 and Asn142 together coordinate pheophytin a. The chain crosses the membrane as a helical span at residues Val152–Ala165. His197 contacts chlorophyll a. Residues Ala207–Asp227 traverse the membrane as a helical segment. A plastoquinone-binding residues include His214 and Phe261. A Fe cation-binding site is contributed by His214. His268 lines the Fe cation pocket. A helical transmembrane segment spans residues Gly278 to Arg294.

The protein belongs to the reaction center PufL/M/PsbA/D family. As to quaternary structure, PSII is composed of 1 copy each of membrane proteins PsbA, PsbB, PsbC, PsbD, PsbE, PsbF, PsbH, PsbI, PsbJ, PsbK, PsbL, PsbM, PsbT, PsbX, PsbY, PsbZ, Psb30/Ycf12, at least 3 peripheral proteins of the oxygen-evolving complex and a large number of cofactors. It forms dimeric complexes. The cofactor is The D1/D2 heterodimer binds P680, chlorophylls that are the primary electron donor of PSII, and subsequent electron acceptors. It shares a non-heme iron and each subunit binds pheophytin, quinone, additional chlorophylls, carotenoids and lipids. There is also a Cl(-1) ion associated with D1 and D2, which is required for oxygen evolution. The PSII complex binds additional chlorophylls, carotenoids and specific lipids..

It is found in the plastid. Its subcellular location is the chloroplast thylakoid membrane. The enzyme catalyses 2 a plastoquinone + 4 hnu + 2 H2O = 2 a plastoquinol + O2. In terms of biological role, photosystem II (PSII) is a light-driven water:plastoquinone oxidoreductase that uses light energy to abstract electrons from H(2)O, generating O(2) and a proton gradient subsequently used for ATP formation. It consists of a core antenna complex that captures photons, and an electron transfer chain that converts photonic excitation into a charge separation. The D1/D2 (PsbA/PsbD) reaction center heterodimer binds P680, the primary electron donor of PSII as well as several subsequent electron acceptors. D2 is needed for assembly of a stable PSII complex. This Stigeoclonium helveticum (Green alga) protein is Photosystem II D2 protein.